A 410-amino-acid chain; its full sequence is Eukaryotic initiation factor 4A (410 aa).

Residues 37–65 carry the Q motif motif; it reads ESFDSMGLQENLLRGIYAYGFEKPSAIQQ. Residues 68–238 form the Helicase ATP-binding domain; it reads IVPFCKGLDV…RKFMNKPVRI (171 aa). Residue 81 to 88 coordinates ATP; the sequence is AQSGTGKT. The short motif at 186-189 is the DEAD box element; the sequence is DEAD. A Helicase C-terminal domain is found at 249–410; sequence GIKQFYVNID…ELPANVADLL (162 aa).

The protein belongs to the DEAD box helicase family. eIF4A subfamily. As to quaternary structure, eIF4F is a multi-subunit complex, the composition of which varies with external and internal environmental conditions. It is composed of at least EIF4A, EIF4E and EIF4G.

It catalyses the reaction ATP + H2O = ADP + phosphate + H(+). Functionally, ATP-dependent RNA helicase which is a subunit of the eIF4F complex involved in cap recognition and is required for mRNA binding to ribosome. In the current model of translation initiation, eIF4A unwinds RNA secondary structures in the 5'-UTR of mRNAs which is necessary to allow efficient binding of the small ribosomal subunit, and subsequent scanning for the initiator codon. The sequence is that of Eukaryotic initiation factor 4A from Zea mays (Maize).